Consider the following 535-residue polypeptide: CTP synthase (535 aa).

The tract at residues Met1 to Leu267 is amidoligase domain. Ser13 contacts CTP. Ser13 lines the UTP pocket. Ser14–Ile19 contributes to the ATP binding site. Residue Tyr54 participates in L-glutamine binding. Asp71 contributes to the ATP binding site. Mg(2+) is bound by residues Asp71 and Glu141. CTP is bound by residues Asp148 to Glu150, Lys188 to Gln193, and Lys224. Residues Lys188–Gln193 and Lys224 each bind UTP. The Glutamine amidotransferase type-1 domain maps to Thr292 to Leu534. Gly354 is a binding site for L-glutamine. The Nucleophile; for glutamine hydrolysis role is filled by Cys381. Residues Leu382 to Gln385, Glu405, and Arg462 each bind L-glutamine. Catalysis depends on residues His507 and Glu509.

This sequence belongs to the CTP synthase family. As to quaternary structure, homotetramer.

It carries out the reaction UTP + L-glutamine + ATP + H2O = CTP + L-glutamate + ADP + phosphate + 2 H(+). It catalyses the reaction L-glutamine + H2O = L-glutamate + NH4(+). The catalysed reaction is UTP + NH4(+) + ATP = CTP + ADP + phosphate + 2 H(+). It functions in the pathway pyrimidine metabolism; CTP biosynthesis via de novo pathway; CTP from UDP: step 2/2. With respect to regulation, allosterically activated by GTP, when glutamine is the substrate; GTP has no effect on the reaction when ammonia is the substrate. The allosteric effector GTP functions by stabilizing the protein conformation that binds the tetrahedral intermediate(s) formed during glutamine hydrolysis. Inhibited by the product CTP, via allosteric rather than competitive inhibition. Its function is as follows. Catalyzes the ATP-dependent amination of UTP to CTP with either L-glutamine or ammonia as the source of nitrogen. Regulates intracellular CTP levels through interactions with the four ribonucleotide triphosphates. The sequence is that of CTP synthase from Carboxydothermus hydrogenoformans (strain ATCC BAA-161 / DSM 6008 / Z-2901).